A 196-amino-acid chain; its full sequence is 3-isopropylmalate dehydratase small subunit (196 aa).

Belongs to the LeuD family. LeuD type 1 subfamily. Heterodimer of LeuC and LeuD.

The catalysed reaction is (2R,3S)-3-isopropylmalate = (2S)-2-isopropylmalate. It participates in amino-acid biosynthesis; L-leucine biosynthesis; L-leucine from 3-methyl-2-oxobutanoate: step 2/4. Catalyzes the isomerization between 2-isopropylmalate and 3-isopropylmalate, via the formation of 2-isopropylmaleate. The protein is 3-isopropylmalate dehydratase small subunit of Herpetosiphon aurantiacus (strain ATCC 23779 / DSM 785 / 114-95).